The chain runs to 175 residues: Bifunctional protein PyrR (175 aa).

A PRPP-binding motif is present at residues 97-109 (IVLIDDVLFTGRT).

Belongs to the purine/pyrimidine phosphoribosyltransferase family. PyrR subfamily. In terms of assembly, homodimer and homohexamer; in equilibrium.

The enzyme catalyses UMP + diphosphate = 5-phospho-alpha-D-ribose 1-diphosphate + uracil. Regulates transcriptional attenuation of the pyrimidine nucleotide (pyr) operon by binding in a uridine-dependent manner to specific sites on pyr mRNA. This disrupts an antiterminator hairpin in the RNA and favors formation of a downstream transcription terminator, leading to a reduced expression of downstream genes. In terms of biological role, also displays a weak uracil phosphoribosyltransferase activity which is not physiologically significant. This Leuconostoc citreum (strain KM20) protein is Bifunctional protein PyrR.